We begin with the raw amino-acid sequence, 299 residues long: Acetylglutamate kinase (299 aa).

Substrate contacts are provided by residues glycine 70–glycine 71, arginine 92, and asparagine 186.

This sequence belongs to the acetylglutamate kinase family. ArgB subfamily.

Its subcellular location is the cytoplasm. It catalyses the reaction N-acetyl-L-glutamate + ATP = N-acetyl-L-glutamyl 5-phosphate + ADP. The protein operates within amino-acid biosynthesis; L-arginine biosynthesis; N(2)-acetyl-L-ornithine from L-glutamate: step 2/4. Its function is as follows. Catalyzes the ATP-dependent phosphorylation of N-acetyl-L-glutamate. This Thermoanaerobacter sp. (strain X514) protein is Acetylglutamate kinase.